Consider the following 454-residue polypeptide: Histidine--tRNA ligase (454 aa).

It belongs to the class-II aminoacyl-tRNA synthetase family. Homodimer.

The protein localises to the cytoplasm. The enzyme catalyses tRNA(His) + L-histidine + ATP = L-histidyl-tRNA(His) + AMP + diphosphate + H(+). The sequence is that of Histidine--tRNA ligase from Porphyromonas gingivalis (strain ATCC BAA-308 / W83).